Consider the following 144-residue polypeptide: Grifin (144 aa).

Positions 5–133 (SKAFCAGGLA…DHCLAQVELA (129 aa)) constitute a Galectin domain. S138 is subject to Phosphoserine.

In terms of assembly, homodimer. As to expression, not detected in lens.

The polypeptide is Grifin (GRIFIN) (Homo sapiens (Human)).